Here is a 143-residue protein sequence, read N- to C-terminus: MFARILGLDVGTKTVGVSVSDLLGMTAQPVETIKIDSEAGELGFDRLAVLIKEYKPEKVVLGLPKHMNGDEGIRAEASRDYGTKLANKFGLEVAYQDERLTTAQAEKVLIDGGVRRKDRKKSIDKLAAVLILQNYLDAHALKL.

The protein belongs to the YqgF nuclease family.

It localises to the cytoplasm. Functionally, could be a nuclease involved in processing of the 5'-end of pre-16S rRNA. The protein is Putative pre-16S rRNA nuclease of Lactococcus lactis subsp. cremoris (strain MG1363).